A 390-amino-acid chain; its full sequence is Galactokinase (390 aa).

34–37 (EHTD) is a substrate binding site. ATP contacts are provided by residues S68 and 122 to 128 (GSGLSSS). Mg(2+) is bound by residues S128 and E160. D172 serves as the catalytic Proton acceptor. Position 221 (Y221) interacts with substrate.

It belongs to the GHMP kinase family. GalK subfamily.

The protein localises to the cytoplasm. It carries out the reaction alpha-D-galactose + ATP = alpha-D-galactose 1-phosphate + ADP + H(+). Its pathway is carbohydrate metabolism; galactose metabolism. Catalyzes the transfer of the gamma-phosphate of ATP to D-galactose to form alpha-D-galactose-1-phosphate (Gal-1-P). This Chloroflexus aggregans (strain MD-66 / DSM 9485) protein is Galactokinase.